The chain runs to 705 residues: Elongation factor G (705 aa).

A tr-type G domain is found at 8–290 (HRYRNIGIMA…GVIHLLPSPA (283 aa)). Residues 17-24 (AHIDAGKT), 88-92 (DTPGH), and 142-145 (NKMD) each bind GTP.

Belongs to the TRAFAC class translation factor GTPase superfamily. Classic translation factor GTPase family. EF-G/EF-2 subfamily.

The protein resides in the cytoplasm. Functionally, catalyzes the GTP-dependent ribosomal translocation step during translation elongation. During this step, the ribosome changes from the pre-translocational (PRE) to the post-translocational (POST) state as the newly formed A-site-bound peptidyl-tRNA and P-site-bound deacylated tRNA move to the P and E sites, respectively. Catalyzes the coordinated movement of the two tRNA molecules, the mRNA and conformational changes in the ribosome. This is Elongation factor G from Xylella fastidiosa (strain M12).